We begin with the raw amino-acid sequence, 323 residues long: Sphingolipid delta(4)-desaturase DES1 (323 aa).

G2 is lipidated: N-myristoyl glycine. 2 helical membrane-spanning segments follow: residues 41–61 and 68–88; these read PNLI…FYIV and WVIF…TLGI. The Histidine box-1 motif lies at 89 to 93; the sequence is HEIAH. Residues 107-127 form a helical membrane-spanning segment; that stretch reads WFGMFANLPIGIPYSVSFKSY. The Histidine box-2 signature appears at 128–132; it reads HMDHH. A run of 3 helical transmembrane segments spans residues 152 to 172, 184 to 204, and 209 to 229; these read FFCT…FYAF, YLEV…YYFL, and LVYM…SGHF. The short motif at 259-263 is the Histidine box-3 element; it reads HNEHH. At S307 the chain carries Phosphoserine.

This sequence belongs to the fatty acid desaturase type 1 family. DEGS subfamily. Interacts with RLBP1; the interaction increases synthesis of chromophore-precursors by DEGS1. Myristoylation can target the enzyme to the mitochondria leading to an increase in ceramide levels.

It localises to the mitochondrion membrane. Its subcellular location is the endoplasmic reticulum membrane. It carries out the reaction an N-acylsphinganine + 2 Fe(II)-[cytochrome b5] + O2 + 2 H(+) = an N-acylsphing-4-enine + 2 Fe(III)-[cytochrome b5] + 2 H2O. The enzyme catalyses all-trans-retinol = 11-cis-retinol. It catalyses the reaction all-trans-retinol = 9-cis-retinol. The catalysed reaction is all-trans-retinol = 13-cis-retinol. It carries out the reaction 11-cis-retinol = 13-cis-retinol. The enzyme catalyses 11-cis-retinol = 9-cis-retinol. Its function is as follows. Has sphingolipid-delta-4-desaturase activity. Converts D-erythro-sphinganine to D-erythro-sphingosine (E-sphing-4-enine). Catalyzes the equilibrium isomerization of retinols. The sequence is that of Sphingolipid delta(4)-desaturase DES1 (DEGS1) from Pongo abelii (Sumatran orangutan).